A 494-amino-acid chain; its full sequence is Glutamyl-tRNA(Gln) amidotransferase subunit A (494 aa).

Catalysis depends on charge relay system residues lysine 78 and serine 158. Serine 182 serves as the catalytic Acyl-ester intermediate.

Belongs to the amidase family. GatA subfamily. As to quaternary structure, heterotrimer of A, B and C subunits.

It catalyses the reaction L-glutamyl-tRNA(Gln) + L-glutamine + ATP + H2O = L-glutaminyl-tRNA(Gln) + L-glutamate + ADP + phosphate + H(+). Allows the formation of correctly charged Gln-tRNA(Gln) through the transamidation of misacylated Glu-tRNA(Gln) in organisms which lack glutaminyl-tRNA synthetase. The reaction takes place in the presence of glutamine and ATP through an activated gamma-phospho-Glu-tRNA(Gln). The polypeptide is Glutamyl-tRNA(Gln) amidotransferase subunit A (Xanthobacter autotrophicus (strain ATCC BAA-1158 / Py2)).